A 432-amino-acid chain; its full sequence is Adenylosuccinate synthetase (432 aa).

GTP-binding positions include 13–19 and 41–43; these read GDEGKGK and GHT. Asp14 (proton acceptor) is an active-site residue. Mg(2+) contacts are provided by Asp14 and Gly41. IMP-binding positions include 14-17, 39-42, Thr130, Arg144, Gln225, Thr240, and Arg304; these read DEGK and NAGH. His42 functions as the Proton donor in the catalytic mechanism. 300–306 lines the substrate pocket; sequence ATTGRRR. GTP-binding positions include Arg306, 332–334, and 415–417; these read KLD and STG.

It belongs to the adenylosuccinate synthetase family. As to quaternary structure, homodimer. The cofactor is Mg(2+).

It localises to the cytoplasm. It catalyses the reaction IMP + L-aspartate + GTP = N(6)-(1,2-dicarboxyethyl)-AMP + GDP + phosphate + 2 H(+). It participates in purine metabolism; AMP biosynthesis via de novo pathway; AMP from IMP: step 1/2. Functionally, plays an important role in the de novo pathway of purine nucleotide biosynthesis. Catalyzes the first committed step in the biosynthesis of AMP from IMP. In Erwinia tasmaniensis (strain DSM 17950 / CFBP 7177 / CIP 109463 / NCPPB 4357 / Et1/99), this protein is Adenylosuccinate synthetase.